Reading from the N-terminus, the 134-residue chain is ATP synthase epsilon chain (134 aa).

It belongs to the ATPase epsilon chain family. As to quaternary structure, F-type ATPases have 2 components, CF(1) - the catalytic core - and CF(0) - the membrane proton channel. CF(1) has five subunits: alpha(3), beta(3), gamma(1), delta(1), epsilon(1). CF(0) has three main subunits: a, b and c.

The protein resides in the cellular thylakoid membrane. In terms of biological role, produces ATP from ADP in the presence of a proton gradient across the membrane. This chain is ATP synthase epsilon chain, found in Prochlorococcus marinus (strain MIT 9515).